We begin with the raw amino-acid sequence, 149 residues long: Macrodomain Ter protein (149 aa).

Belongs to the MatP family. As to quaternary structure, homodimer.

The protein resides in the cytoplasm. Required for spatial organization of the terminus region of the chromosome (Ter macrodomain) during the cell cycle. Prevents early segregation of duplicated Ter macrodomains during cell division. Binds specifically to matS, which is a 13 bp signature motif repeated within the Ter macrodomain. In Vibrio campbellii (strain ATCC BAA-1116), this protein is Macrodomain Ter protein.